We begin with the raw amino-acid sequence, 435 residues long: Methylenetetrahydrofolate--tRNA-(uracil-5-)-methyltransferase TrmFO (435 aa).

9-14 (GAGLAG) serves as a coordination point for FAD.

This sequence belongs to the MnmG family. TrmFO subfamily. FAD is required as a cofactor.

The protein localises to the cytoplasm. The catalysed reaction is uridine(54) in tRNA + (6R)-5,10-methylene-5,6,7,8-tetrahydrofolate + NADH + H(+) = 5-methyluridine(54) in tRNA + (6S)-5,6,7,8-tetrahydrofolate + NAD(+). The enzyme catalyses uridine(54) in tRNA + (6R)-5,10-methylene-5,6,7,8-tetrahydrofolate + NADPH + H(+) = 5-methyluridine(54) in tRNA + (6S)-5,6,7,8-tetrahydrofolate + NADP(+). In terms of biological role, catalyzes the folate-dependent formation of 5-methyl-uridine at position 54 (M-5-U54) in all tRNAs. In Staphylococcus aureus (strain MRSA252), this protein is Methylenetetrahydrofolate--tRNA-(uracil-5-)-methyltransferase TrmFO.